The sequence spans 975 residues: GPI inositol-deacylase (975 aa).

The chain crosses the membrane as a helical span at residues 27 to 47; that stretch reads STLVIIVGLLLLCIITSTHIS. A glycan (N-linked (GlcNAc...) asparagine) is linked at Asn49. Residue Ser210 is part of the active site. 5 N-linked (GlcNAc...) asparagine glycosylation sites follow: Asn276, Asn384, Asn407, Asn419, and Asn488. Residues 655-675 traverse the membrane as a helical segment; sequence LAFASIPISIIALVLCYQFYY. Asn696 carries an N-linked (GlcNAc...) asparagine glycan. Helical transmembrane passes span 699–719, 751–771, and 818–838; these read LLIF…AILT, FVWW…FIIL, and VCFI…FILV. The N-linked (GlcNAc...) asparagine glycan is linked to Asn867. 3 helical membrane-spanning segments follow: residues 868–888, 932–952, and 955–975; these read VSFL…VVVF, NWLI…MYGI, and LYWV…LTIL.

It belongs to the GPI inositol-deacylase family.

The protein localises to the endoplasmic reticulum membrane. In terms of biological role, involved in inositol deacylation of GPI-anchored proteins which plays important roles in the quality control and ER-associated degradation of GPI-anchored proteins. This Kluyveromyces lactis (strain ATCC 8585 / CBS 2359 / DSM 70799 / NBRC 1267 / NRRL Y-1140 / WM37) (Yeast) protein is GPI inositol-deacylase (BST1).